The following is a 205-amino-acid chain: Urease accessory protein UreE (205 aa).

A disordered region spans residues 171–205 (AHEAHPHAHSHAGGHGHVHSGHGHGGKHGEHDAES). Residues 177–196 (HAHSHAGGHGHVHSGHGHGG) show a composition bias toward basic residues.

This sequence belongs to the UreE family.

The protein resides in the cytoplasm. Its function is as follows. Involved in urease metallocenter assembly. Binds nickel. Probably functions as a nickel donor during metallocenter assembly. The chain is Urease accessory protein UreE from Bordetella bronchiseptica (strain ATCC BAA-588 / NCTC 13252 / RB50) (Alcaligenes bronchisepticus).